The primary structure comprises 71 residues: Delta-actitoxin-Avd2b 2 (71 aa).

Positions 1–20 (MNRLLVFLMLGAAFMLVVSA) are cleaved as a signal peptide. A propeptide spanning residues 21-41 (NDAYGDEPAFKDLNQGDESLG) is cleaved from the precursor. Cystine bridges form between cysteine 46–cysteine 61, cysteine 47–cysteine 55, and cysteine 49–cysteine 66.

Belongs to the sea anemone short toxin (type III) family.

It localises to the secreted. The protein localises to the nematocyst. Its function is as follows. Voltage-gated sodium channel (Nav) inhibitor. 1 uM completely inhibits insect voltage-gated sodium channel inactivation (DmNav1 from D.melanogaster). The chain is Delta-actitoxin-Avd2b 2 from Anemonia viridis (Snakelocks anemone).